The sequence spans 223 residues: Ribonuclease 3 (223 aa).

The RNase III domain maps to 5-127 (LQRLEKKIGY…IIGAIYLDSD (123 aa)). Glu40 is a binding site for Mg(2+). Asp44 is a catalytic residue. Positions 113 and 116 each coordinate Mg(2+). The active site involves Glu116. The 70-residue stretch at 154–223 (DPKTRLQEYL…AADIALGQLN (70 aa)) folds into the DRBM domain.

It belongs to the ribonuclease III family. Homodimer. Mg(2+) serves as cofactor.

The protein resides in the cytoplasm. The catalysed reaction is Endonucleolytic cleavage to 5'-phosphomonoester.. Its function is as follows. Digests double-stranded RNA. Involved in the processing of primary rRNA transcript to yield the immediate precursors to the large and small rRNAs (23S and 16S). Processes some mRNAs, and tRNAs when they are encoded in the rRNA operon. Processes pre-crRNA and tracrRNA of type II CRISPR loci if present in the organism. This is Ribonuclease 3 from Aliivibrio fischeri (strain ATCC 700601 / ES114) (Vibrio fischeri).